A 465-amino-acid chain; its full sequence is UDP-N-acetylmuramoylalanine--D-glutamate ligase (465 aa).

ATP is bound at residue Gly-124–Thr-130.

The protein belongs to the MurCDEF family.

The protein localises to the cytoplasm. The catalysed reaction is UDP-N-acetyl-alpha-D-muramoyl-L-alanine + D-glutamate + ATP = UDP-N-acetyl-alpha-D-muramoyl-L-alanyl-D-glutamate + ADP + phosphate + H(+). The protein operates within cell wall biogenesis; peptidoglycan biosynthesis. Cell wall formation. Catalyzes the addition of glutamate to the nucleotide precursor UDP-N-acetylmuramoyl-L-alanine (UMA). The chain is UDP-N-acetylmuramoylalanine--D-glutamate ligase from Ruminiclostridium cellulolyticum (strain ATCC 35319 / DSM 5812 / JCM 6584 / H10) (Clostridium cellulolyticum).